Reading from the N-terminus, the 346-residue chain is Quinolinate synthase (346 aa).

Iminosuccinate contacts are provided by His-47 and Ser-68. Cys-113 contacts [4Fe-4S] cluster. Residues 139–141 (YAN) and Ser-156 contribute to the iminosuccinate site. Residue Cys-200 participates in [4Fe-4S] cluster binding. Iminosuccinate contacts are provided by residues 226-228 (HPE) and Thr-243. [4Fe-4S] cluster is bound at residue Cys-297.

The protein belongs to the quinolinate synthase family. Type 1 subfamily. Requires [4Fe-4S] cluster as cofactor.

It is found in the cytoplasm. It catalyses the reaction iminosuccinate + dihydroxyacetone phosphate = quinolinate + phosphate + 2 H2O + H(+). The protein operates within cofactor biosynthesis; NAD(+) biosynthesis; quinolinate from iminoaspartate: step 1/1. Its function is as follows. Catalyzes the condensation of iminoaspartate with dihydroxyacetone phosphate to form quinolinate. This is Quinolinate synthase from Pseudoalteromonas translucida (strain TAC 125).